The chain runs to 1328 residues: Peroxidasin homolog pxn-2 (1328 aa).

A signal peptide spans 1–16; that stretch reads MLLEFLLLIGISLSTA. The region spanning 17-45 is the LRRNT domain; the sequence is CPSECRCAGLDVHCEGKNLTAIPGHIPIA. N34 carries N-linked (GlcNAc...) asparagine glycosylation. LRR repeat units follow at residues 42–66, 67–90, 92–114, 116–137, 138–161, and 164–191; these read IPIATTNLYFSNNLLNSLSKSNFQA, LPNLQYLDLSNNSIRDIEETLLDS, PGLKYLDLSWNKIRYVPKLSTAP, ALVSLNLVHNEISRLDNDLVSH, SPYMQTFLIQRNRIQSLPHDFFNS, and VPTLKTVKMAGNPWSCDCRMVNVKQFAD. Residue N77 is glycosylated (N-linked (GlcNAc...) asparagine). N220 is a glycosylation site (N-linked (GlcNAc...) asparagine). Positions 305–332 are disordered; that stretch reads KKMQASSSTEPPITTTTMEPMTTSTMDS. Residues 310–332 are compositionally biased toward low complexity; sequence SSSTEPPITTTTMEPMTTSTMDS. Ig-like C2-type domains lie at 346 to 438 and 445 to 532; these read PEID…FSVS and PVII…ANLL. The cysteines at positions 373 and 422 are disulfide-linked. N-linked (GlcNAc...) asparagine glycans are attached at residues N403 and N455. The cysteines at positions 466 and 516 are disulfide-linked. Residue N630 is glycosylated (N-linked (GlcNAc...) asparagine). The cysteines at positions 660 and 676 are disulfide-linked. Residue D754 coordinates heme b. H755 acts as the Proton acceptor in catalysis. D756 contributes to the Ca(2+) binding site. Disulfide bonds link C775–C785 and C779–C807. N-linked (GlcNAc...) asparagine glycosylation occurs at N776. Ca(2+) is bound by residues T839, Y841, D843, and S845. A glycan (N-linked (GlcNAc...) asparagine) is linked at N894. Positions 913 and 1008 each coordinate heme b. One copy of the LRR 7 repeat lies at 1085–1109; sequence ALDLAALNIQRGRDHGLPSWTEYRK. Cystine bridges form between C1111–C1168 and C1209–C1236. N-linked (GlcNAc...) asparagine glycosylation is found at N1112 and N1128. The stretch at 1204–1225 is one LRR 8 repeat; it reads LSKIICTNGDDIDRIQRDIFVY. The N-linked (GlcNAc...) asparagine glycan is linked to N1228. The disordered stretch occupies residues 1266 to 1297; it reads IGGDEKAKRRKRRHHHSKKSCHDKGKRRKSGD. The segment covering 1273 to 1295 has biased composition (basic residues); that stretch reads KRRKRRHHHSKKSCHDKGKRRKS. Residue N1300 is glycosylated (N-linked (GlcNAc...) asparagine).

The protein belongs to the peroxidase family. XPO subfamily. Ca(2+) serves as cofactor. Heme b is required as a cofactor. In terms of tissue distribution, expressed in vulval muscles and in some neurons including PVQ. Expressed in the hypodermis and in coelomocytes.

It localises to the secreted. The protein resides in the extracellular space. It is found in the extracellular matrix. The protein localises to the basement membrane. The enzyme catalyses L-lysyl-[collagen] + L-methionyl-[collagen] + H2O2 = [collagen]-L-lysyl-N-S-L-methionyl-[collagen] + 2 H2O + H(+). The catalysed reaction is bromide + H2O2 = hypobromite + H2O. It carries out the reaction L-lysyl-[collagen] + L-methionyl-[collagen] + hypobromite = [collagen]-L-lysyl-N-S-L-methionyl-[collagen] + bromide + H2O + H(+). It catalyses the reaction L-tyrosyl-[protein] + bromide + H2O2 + H(+) = 3-bromo-L-tyrosyl-[protein] + 2 H2O. The enzyme catalyses hypobromite + L-tyrosyl-[protein] + H(+) = 3-bromo-L-tyrosyl-[protein] + H2O. Catalyzes the two-electron oxidation of bromide by hydrogen peroxide and generates hypobromite as a reactive intermediate which mediates the formation of sulfilimine cross-links between methionine and hydroxylysine residues within an uncross-linked collagen IV/COL4A1 NC1 hexamer. Required for embryonic morphogenesis playing a role in epidermal elongation at the twofold stage of embryonic development. Required post-embryonically for basement membrane integrity and muscle-epidermal attachments, and specifically in the function of basement membrane components such as the type IV collagens. May have a role in inhibiting axon regeneration. May functionally antagonize the peroxidasin pxn-1. The protein is Peroxidasin homolog pxn-2 of Caenorhabditis elegans.